A 455-amino-acid chain; its full sequence is Phosphoglucosamine mutase (455 aa).

The active-site Phosphoserine intermediate is Ser-108. Positions 108, 246, 248, and 250 each coordinate Mg(2+). At Ser-108 the chain carries Phosphoserine.

Belongs to the phosphohexose mutase family. The cofactor is Mg(2+). In terms of processing, activated by phosphorylation.

The catalysed reaction is alpha-D-glucosamine 1-phosphate = D-glucosamine 6-phosphate. Its function is as follows. Catalyzes the conversion of glucosamine-6-phosphate to glucosamine-1-phosphate. In Frankia alni (strain DSM 45986 / CECT 9034 / ACN14a), this protein is Phosphoglucosamine mutase.